Consider the following 535-residue polypeptide: Bifunctional purine biosynthesis protein PurH (535 aa).

The 146-residue stretch at 6–151 (TRLPVRRALI…KNHKDVAIVV (146 aa)) folds into the MGS-like domain.

The protein belongs to the PurH family.

It catalyses the reaction (6R)-10-formyltetrahydrofolate + 5-amino-1-(5-phospho-beta-D-ribosyl)imidazole-4-carboxamide = 5-formamido-1-(5-phospho-D-ribosyl)imidazole-4-carboxamide + (6S)-5,6,7,8-tetrahydrofolate. It carries out the reaction IMP + H2O = 5-formamido-1-(5-phospho-D-ribosyl)imidazole-4-carboxamide. Its pathway is purine metabolism; IMP biosynthesis via de novo pathway; 5-formamido-1-(5-phospho-D-ribosyl)imidazole-4-carboxamide from 5-amino-1-(5-phospho-D-ribosyl)imidazole-4-carboxamide (10-formyl THF route): step 1/1. The protein operates within purine metabolism; IMP biosynthesis via de novo pathway; IMP from 5-formamido-1-(5-phospho-D-ribosyl)imidazole-4-carboxamide: step 1/1. This is Bifunctional purine biosynthesis protein PurH from Pseudomonas putida (strain GB-1).